The sequence spans 57 residues: Sperm histone (57 aa).

Positions 1–57 are disordered; it reads MARYRRTRTRSRSRRRRRSRRRRSSRRRRYGRSRRSYRSVGRRRRRYGRRRRRRRRY. Thr9 carries the post-translational modification Phosphothreonine.

Belongs to the protamine P1 family. As to expression, testis.

The protein localises to the nucleus. It is found in the chromosome. Functionally, protamines substitute for histones in the chromatin of sperm during the haploid phase of spermatogenesis. They compact sperm DNA into a highly condensed, stable and inactive complex. This is Sperm histone from Coturnix japonica (Japanese quail).